The primary structure comprises 1411 residues: Zinc finger protein 609 (1411 aa).

Disordered regions lie at residues 1 to 26 (MSLSSGASGGKGVDANPVETYDSGDE), 47 to 190 (QKLE…QPVP), 353 to 484 (PRFC…EPTV), 517 to 659 (AHAH…ARPI), 679 to 963 (ASPG…VIQQ), 1005 to 1125 (YEEQ…RQAE), 1153 to 1221 (KSED…LTQH), and 1270 to 1367 (GSKV…STHH). Serine 358, serine 361, and serine 379 each carry phosphoserine. The span at 377–401 (PNSNTPVNETATASDSKGTSNSSKT) shows a compositional bias: polar residues. Phosphothreonine is present on threonine 381. Phosphoserine occurs at positions 413, 433, 446, 452, 467, and 470. A compositionally biased stretch (polar residues) spans 423-437 (ASSTSEDVKASPSSA). Residue lysine 479 forms a Glycyl lysine isopeptide (Lys-Gly) (interchain with G-Cter in SUMO2) linkage. The C2H2-type zinc-finger motif lies at 495 to 520 (IDCPHPNCNKKYKHINGLKYHQAHAH). Over residues 519 to 529 (AHTDDDSKPEA) the composition is skewed to basic and acidic residues. The residue at position 533 (serine 533) is a Phosphoserine. Over residues 549–563 (NGASVSQKGSLSPAR) the composition is skewed to polar residues. A phosphoserine mark is found at serine 576 and serine 578. The span at 626–649 (SLERKCMEKEKCKKPSSLKPEKIP) shows a compositional bias: basic and acidic residues. Residues 679-700 (ASPGSSSGLTATVAQAMPNSPQ) show a composition bias toward polar residues. The segment covering 726 to 736 (DKKKKDKKKKE) has biased composition (basic residues). Serine 743 carries the phosphoserine modification. Threonine 746 is subject to Phosphothreonine. Over residues 751–764 (CRAEEGKSPFRESS) the composition is skewed to basic and acidic residues. A Phosphoserine modification is found at serine 758. Residue lysine 789 forms a Glycyl lysine isopeptide (Lys-Gly) (interchain with G-Cter in SUMO2) linkage. Residues 798–844 (FTDNAPSPSIGGSSRLENTTPTQPLTPLHVVTQNGAEASSVKTNSPA) are compositionally biased toward polar residues. Position 804 is a phosphoserine (serine 804). The residue at position 823 (threonine 823) is a Phosphothreonine. Serine 842, serine 846, and serine 849 each carry phosphoserine. Basic and acidic residues predominate over residues 855 to 876 (GEGKVDSVKSKDAEQLVKEGAK). Residues 897-908 (SYYSPSYAQSSP) show a composition bias toward low complexity. Over residues 926–950 (TKRDEEPESIEGKVKNDICEEKKPE) the composition is skewed to basic and acidic residues. Positions 952–963 (SSSSQQPSVIQQ) are enriched in low complexity. A compositionally biased stretch (basic and acidic residues) spans 1020-1042 (GVDKKAEMGLKEREAALKEEWKQ). Position 1055 is a phosphoserine (serine 1055). Residue lysine 1061 forms a Glycyl lysine isopeptide (Lys-Gly) (interchain with G-Cter in SUMO2) linkage. Basic and acidic residues-rich tracts occupy residues 1097 to 1113 (LKVKLSDASHLSKEASE), 1153 to 1187 (KSEDERWKEERDRKLKEERSRSKDSVPKEDGKEST), and 1195 to 1208 (TSEESRLGSKEPRP). A Glycyl lysine isopeptide (Lys-Gly) (interchain with G-Cter in SUMO2) cross-link involves residue lysine 1153. Over residues 1286 to 1296 (PSVTCKSSSES) the composition is skewed to polar residues. A Glycyl lysine isopeptide (Lys-Gly) (interchain with G-Cter in SUMO2) cross-link involves residue lysine 1297. Positions 1328-1337 (GCGVVGGGGS) are enriched in gly residues.

As to quaternary structure, interacts (via N-terminus) with NIPBL. Interacts with INTS13; promoting association with the integrator complex. In terms of tissue distribution, isoform 1: Expressed in myoblasts and myotubes. Isoform 2: Expressed in myoblasts and myotubes, with a preference in undifferentiated myoblasts.

The protein resides in the nucleus. Its function is as follows. Transcription factor, which activates RAG1, and possibly RAG2, transcription. Through the regulation of RAG1/2 expression, may regulate thymocyte maturation. Along with NIPBL and the multiprotein complex Integrator, promotes cortical neuron migration during brain development by regulating the transcription of crucial genes in this process. Preferentially binds promoters containing paused RNA polymerase II. Up-regulates the expression of SEMA3A, NRP1, PLXND1 and GABBR2 genes, among others. Functionally, involved in the regulation of myoblast proliferation during myogenesis. The polypeptide is Zinc finger protein 609 (Homo sapiens (Human)).